A 914-amino-acid polypeptide reads, in one-letter code: Ubiquitin carboxyl-terminal hydrolase 20 (914 aa).

The UBP-type zinc-finger motif lies at 6 to 111; it reads DLCPHLDSIG…GSSSKFSEQD (106 aa). Zn(2+) is bound by residues Cys8, His10, Cys30, Cys33, Cys43, Cys48, Cys53, His60, His64, His70, Cys83, and Cys86. A phosphoserine mark is found at Ser112, Ser132, and Ser134. One can recognise a USP domain in the interval 145 to 685; that stretch reads TGMKNLGNSC…EGYVLFYRKS (541 aa). Cys154 acts as the Nucleophile in catalysis. 2 disordered regions span residues 257 to 347 and 360 to 415; these read LTEA…VDED and QPAE…ASPV. Thr258 is modified (phosphothreonine). Over residues 259–279 the composition is skewed to basic and acidic residues; sequence EARDSDSSDTDEKREGDRSPS. Ser305 carries the post-translational modification Phosphoserine. The segment covering 316–332 has biased composition (basic and acidic residues); that stretch reads EAGRAISEKERMKDRKF. Position 368 is a phosphoserine (Ser368). At Thr377 the chain carries Phosphothreonine. 2 positions are modified to phosphoserine: Ser408 and Ser413. His643 functions as the Proton acceptor in the catalytic mechanism. DUSP domains lie at 687–780 and 789–892; these read EEAM…LYVC and ALAK…RQSV.

This sequence belongs to the peptidase C19 family. USP20/USP33 subfamily. As to quaternary structure, interacts with VHL, leading to its ubiquitination and subsequent degradation. Interacts with CCP110. Interacts with DIO2. Interacts with HIF1A. Interacts with ADRB2. Interacts with USP18. In terms of processing, ubiquitinated via a VHL-dependent pathway for proteasomal degradation.

The protein localises to the cytoplasm. It localises to the endoplasmic reticulum. The protein resides in the perinuclear region. It is found in the cytoskeleton. Its subcellular location is the microtubule organizing center. The protein localises to the centrosome. The catalysed reaction is Thiol-dependent hydrolysis of ester, thioester, amide, peptide and isopeptide bonds formed by the C-terminal Gly of ubiquitin (a 76-residue protein attached to proteins as an intracellular targeting signal).. Functionally, deubiquitinating enzyme that plays a role in many cellular processes including autophagy, cellular antiviral response or membrane protein biogenesis. Attenuates TLR4-mediated NF-kappa-B signaling by cooperating with beta-arrestin-2/ARRB2 and inhibiting TRAF6 autoubiquitination. Promotes cellular antiviral responses by deconjugating 'Lys-33' and 'Lys-48'-linked ubiquitination of STING1 leading to its stabilization. Plays an essential role in autophagy induction by regulating the ULK1 stability through deubiquitination of ULK1. Acts as a positive regulator for NF-kappa-B activation by TNF-alpha through deubiquitinating 'Lys-48'-linked polyubiquitination of SQSTM1, leading to its increased stability. Acts as a regulator of G-protein coupled receptor (GPCR) signaling by mediating the deubiquitination beta-2 adrenergic receptor (ADRB2). Plays a central role in ADRB2 recycling and resensitization after prolonged agonist stimulation by constitutively binding ADRB2, mediating deubiquitination of ADRB2 and inhibiting lysosomal trafficking of ADRB2. Upon dissociation, it is probably transferred to the translocated beta-arrestins, possibly leading to beta-arrestins deubiquitination and disengagement from ADRB2. This suggests the existence of a dynamic exchange between the ADRB2 and beta-arrestins. Deubiquitinates DIO2, thereby regulating thyroid hormone regulation. Deubiquitinates HIF1A, leading to stabilize HIF1A and enhance HIF1A-mediated activity. Deubiquitinates MCL1, a pivotal member of the anti-apoptotic Bcl-2 protein family to regulate its stability. Within the endoplasmic reticulum, participates with USP33 in the rescue of post-translationally targeted membrane proteins that are inappropriately ubiquitinated by the cytosolic protein quality control in the cytosol. This is Ubiquitin carboxyl-terminal hydrolase 20 (USP20) from Homo sapiens (Human).